We begin with the raw amino-acid sequence, 261 residues long: Uridine-cytidine kinase 2 (261 aa).

A disordered region spans residues 1 to 24 (MAGDSEQALPKHSPQNGQPFLIGV). 26 to 34 (GGTASGKSS) provides a ligand contact to ATP. Positions 83, 111, 116, 165, 175, and 183 each coordinate substrate. Asp212 contributes to the ATP binding site. A compositionally biased stretch (polar residues) spans 238–247 (NGYTNGFTSP). A disordered region spans residues 238–261 (NGYTNGFTSPRTRHPSDSNSSRPH).

It belongs to the uridine kinase family. Homotetramer.

It carries out the reaction uridine + ATP = UMP + ADP + H(+). The enzyme catalyses cytidine + ATP = CMP + ADP + H(+). It functions in the pathway pyrimidine metabolism; CTP biosynthesis via salvage pathway; CTP from cytidine: step 1/3. Its pathway is pyrimidine metabolism; UMP biosynthesis via salvage pathway; UMP from uridine: step 1/1. Functionally, phosphorylates uridine and cytidine to uridine monophosphate and cytidine monophosphate. Does not phosphorylate deoxyribonucleosides or purine ribonucleosides. Can use ATP or GTP as a phosphate donor. The sequence is that of Uridine-cytidine kinase 2 (uck2) from Xenopus tropicalis (Western clawed frog).